We begin with the raw amino-acid sequence, 199 residues long: MPAIPPKLILASSSRYRRELLSRLRLPFTAISPDVDETPQPGEAPADLALRLSVAKAMAVAATHPGSVVIGSDQVATVDGDPIGKPGGFERAREQLRRLSGRAVEFHSAMAVTDGVHTETADIVTLCRFRTLTDAAIDAYLRAEEPYDTAGSAKAESLGIALMDSIRSDDPTAIIGLPLIALTRMLGRFGLDPLTGHPA.

Aspartate 73 acts as the Proton acceptor in catalysis.

This sequence belongs to the Maf family. YceF subfamily. Requires a divalent metal cation as cofactor.

The protein resides in the cytoplasm. The catalysed reaction is N(7)-methyl-GTP + H2O = N(7)-methyl-GMP + diphosphate + H(+). Its function is as follows. Nucleoside triphosphate pyrophosphatase that hydrolyzes 7-methyl-GTP (m(7)GTP). May have a dual role in cell division arrest and in preventing the incorporation of modified nucleotides into cellular nucleic acids. In Bordetella bronchiseptica (strain ATCC BAA-588 / NCTC 13252 / RB50) (Alcaligenes bronchisepticus), this protein is 7-methyl-GTP pyrophosphatase.